A 93-amino-acid chain; its full sequence is Large ribosomal subunit protein uL23cy (93 aa).

This sequence belongs to the universal ribosomal protein uL23 family. Part of the 50S ribosomal subunit.

The protein resides in the plastid. It localises to the chloroplast. In terms of biological role, binds to 23S rRNA. This Agrostis stolonifera (Creeping bentgrass) protein is Large ribosomal subunit protein uL23cy (rpl23-B).